The chain runs to 500 residues: MVLSKTVSQSDVSIHSTFASRYVRTSLPRFKMPDNSIPKEAAYQIINDELMLDGNPRLNLASFVTTWMEPECDKLMMDSINKNYVDMDEYPVTTELQNRCVNMIAHLFNAPLEDGETAVGVGTVGSSEAIMLAGLAFKRKWQNKMKAQGKPCDKPNIVTGANVQVCWEKFARYFEVELKEVKLSEGYYVMDPEKAVEMVDENTICVAAILGSTLNGEFEDVKRLNDLLVEKNKETGWDTPIHVDAASGGFIAPFIYPELEWDFRLPLVKSINVSGHKYGLVYAGIGWVVWRNKDDLPDELIFHINYLGADQPTFTLNFSKGSSQVIAQYYQLIRLGYEGYKNVMENCQENASVLREGLEKTGRFNIISKEIGVPLVAFSLKDNRQHNEFEISETLRRFGWIVPAYTMPPNAQHITVLRVVIREDFSRTLAERLVRDIEKVLHELDTLPARVNAKLAVAEEQAAANGSEVHKKTDSEVQLEMITAWKKFVEEKKKKTNRVC.

At K277 the chain carries N6-(pyridoxal phosphate)lysine. The segment at 469-500 is calmodulin-binding; that stretch reads VHKKTDSEVQLEMITAWKKFVEEKKKKTNRVC.

It belongs to the group II decarboxylase family. In terms of assembly, homodimer. Pyridoxal 5'-phosphate is required as a cofactor.

The catalysed reaction is L-glutamate + H(+) = 4-aminobutanoate + CO2. Catalyzes the production of GABA. The calmodulin-binding is calcium-dependent and it is proposed that this may, directly or indirectly, form a calcium regulated control of GABA biosynthesis. The chain is Glutamate decarboxylase (GAD) from Petunia hybrida (Petunia).